Here is a 497-residue protein sequence, read N- to C-terminus: Probable cytosol aminopeptidase (497 aa).

Mn(2+)-binding residues include K263 and D268. Residue K275 is part of the active site. Mn(2+)-binding residues include D286, D345, and E347. Residue R349 is part of the active site.

The protein belongs to the peptidase M17 family. Mn(2+) serves as cofactor.

It localises to the cytoplasm. It catalyses the reaction Release of an N-terminal amino acid, Xaa-|-Yaa-, in which Xaa is preferably Leu, but may be other amino acids including Pro although not Arg or Lys, and Yaa may be Pro. Amino acid amides and methyl esters are also readily hydrolyzed, but rates on arylamides are exceedingly low.. The enzyme catalyses Release of an N-terminal amino acid, preferentially leucine, but not glutamic or aspartic acids.. Functionally, presumably involved in the processing and regular turnover of intracellular proteins. Catalyzes the removal of unsubstituted N-terminal amino acids from various peptides. The protein is Probable cytosol aminopeptidase of Sinorhizobium medicae (strain WSM419) (Ensifer medicae).